The primary structure comprises 223 residues: MDAKQIAQFIDHTALTAEKTEQDIIQLCDEAITHQFWSVCINSAYIPLAKQKLAGTPVKICTVVGFPLGANLSTVKAFETTEAIKAGADEIDMVINVGWIKSNKWDAVEKDIATVLAACAGKPLKVILETCLLSKDEIVKACEICKTLNVAFVKTSTGFNRGGATKEDVALMKRTVGDIGVKASGGVRDTETAIAMINAGASRIGASAGIAIIHGLQDVSSTY.

The active-site Proton donor/acceptor is Asp-92. The Schiff-base intermediate with acetaldehyde role is filled by Lys-154. Lys-182 (proton donor/acceptor) is an active-site residue.

This sequence belongs to the DeoC/FbaB aldolase family. DeoC type 1 subfamily.

Its subcellular location is the cytoplasm. The catalysed reaction is 2-deoxy-D-ribose 5-phosphate = D-glyceraldehyde 3-phosphate + acetaldehyde. It functions in the pathway carbohydrate degradation; 2-deoxy-D-ribose 1-phosphate degradation; D-glyceraldehyde 3-phosphate and acetaldehyde from 2-deoxy-alpha-D-ribose 1-phosphate: step 2/2. Catalyzes a reversible aldol reaction between acetaldehyde and D-glyceraldehyde 3-phosphate to generate 2-deoxy-D-ribose 5-phosphate. In Pasteurella multocida (strain Pm70), this protein is Deoxyribose-phosphate aldolase.